The chain runs to 382 residues: Type 2 DNA topoisomerase 6 subunit A (382 aa).

Residues Tyr-14 to Tyr-155 form the Topo IIA-type catalytic domain. The active-site O-(5'-phospho-DNA)-tyrosine intermediate is the Tyr-108. Glu-202 and Asp-254 together coordinate Mg(2+).

The protein belongs to the TOP6A family. Homodimer. Heterotetramer of two Top6A and two Top6B chains. The cofactor is Mg(2+).

It catalyses the reaction ATP-dependent breakage, passage and rejoining of double-stranded DNA.. Its function is as follows. Relaxes both positive and negative superturns and exhibits a strong decatenase activity. The polypeptide is Type 2 DNA topoisomerase 6 subunit A (Pyrococcus abyssi (strain GE5 / Orsay)).